The primary structure comprises 121 residues: Large ribosomal subunit protein uL14 (121 aa).

This sequence belongs to the universal ribosomal protein uL14 family. As to quaternary structure, part of the 50S ribosomal subunit. Forms a cluster with proteins L3 and L19. In the 70S ribosome, L14 and L19 interact and together make contacts with the 16S rRNA in bridges B5 and B8.

In terms of biological role, binds to 23S rRNA. Forms part of two intersubunit bridges in the 70S ribosome. The polypeptide is Large ribosomal subunit protein uL14 (Synechococcus sp. (strain RCC307)).